A 567-amino-acid chain; its full sequence is CTD small phosphatase-like protein 2 (567 aa).

Disordered stretches follow at residues 31-53 (QQQQ…HQCE), 100-150 (ASST…FSSV), and 280-361 (NKEN…EEFN). Low complexity-rich tracts occupy residues 100–118 (ASST…SPLK), 130–150 (SMND…FSSV), and 286–297 (ESNNSNSNSNSS). Residues 298-308 (PSFFHNLQQHP) show a composition bias toward polar residues. The span at 309–332 (TSAATTTTTTTTTITTTSATTSII) shows a compositional bias: low complexity. Positions 337-360 (NSDDEIDDECDDESEEEEEDEEEF) are enriched in acidic residues. An FCP1 homology domain is found at 386 to 544 (HSSPKISLVL…LQLVPFLESL (159 aa)).

It belongs to the CTDSPL2 family.

Probable phosphatase. In Dictyostelium discoideum (Social amoeba), this protein is CTD small phosphatase-like protein 2 (ctdspl2).